The primary structure comprises 279 residues: MQVATTKKALIDALLHHKSVGLVPTMGALHSGHASLVKAARAENDTVVASIFVNPLQFEALGDCDDYRNYPRQLDADLALLEEAGVDIVFAPDVEEMYPGGLPLVWARTGSIGTKLEGASRPGHFDGVATVVAKLFNLVRPDRAYFGQKDAQQVAVIRRLVADLDIPVEIRPVPIIRSADGLAESSRNQRLSADQRAQALVLPQVLSGLQRRKAAGEALDIQGARDTLASADGVRLDHLEIVDPATLEPLEIDGLLTQPALVVAAIFVGPVRLIDNIEL.

Residue 26-33 (MGALHSGH) participates in ATP binding. Histidine 33 serves as the catalytic Proton donor. Glutamine 57 is a (R)-pantoate binding site. Glutamine 57 is a binding site for beta-alanine. 147-150 (GQKD) contacts ATP. Residue glutamine 153 coordinates (R)-pantoate. ATP is bound by residues isoleucine 176 and 184–187 (ESSR).

It belongs to the pantothenate synthetase family. As to quaternary structure, homodimer.

Its subcellular location is the cytoplasm. It catalyses the reaction (R)-pantoate + beta-alanine + ATP = (R)-pantothenate + AMP + diphosphate + H(+). It functions in the pathway cofactor biosynthesis; (R)-pantothenate biosynthesis; (R)-pantothenate from (R)-pantoate and beta-alanine: step 1/1. In terms of biological role, catalyzes the condensation of pantoate with beta-alanine in an ATP-dependent reaction via a pantoyl-adenylate intermediate. In Corynebacterium glutamicum (strain R), this protein is Pantothenate synthetase.